Reading from the N-terminus, the 441-residue chain is Nuclear distribution protein nudF (441 aa).

The LisH domain occupies 9–41 (QAEELHKSIIAYLASVNLTESSAALRAELGDSV). WD repeat units lie at residues 87-128 (GHRE…RTVK), 130-170 (HTKA…KNIR), 174-221 (GHDH…CVKT), 224-263 (GHVD…TKST), 266-326 (GHEH…IKTL), 328-367 (GHDN…KCVR), 372-402 (AHGH…NGAP), and 403-440 (AATA…RIFA). Residues 390 to 415 (GGANGESETNGAPAATATTNGVRPDP) form a disordered region. The span at 398-410 (TNGAPAATATTNG) shows a compositional bias: low complexity.

The protein belongs to the WD repeat LIS1/nudF family. As to quaternary structure, self-associates. Interacts with nudE and dynein.

The protein localises to the cytoplasm. It is found in the cytoskeleton. It localises to the spindle pole. In terms of biological role, positively regulates the activity of the minus-end directed microtubule motor protein dynein. May enhance dynein-mediated microtubule sliding by targeting dynein to the microtubule plus end. Required for nuclear migration during vegetative growth as well as development. Required for retrograde early endosome (EE) transport from the hyphal tip. Required for localization of dynein to the mitotic spindle poles. Recruits additional proteins to the dynein complex at SPBs. The polypeptide is Nuclear distribution protein nudF (Neosartorya fischeri (strain ATCC 1020 / DSM 3700 / CBS 544.65 / FGSC A1164 / JCM 1740 / NRRL 181 / WB 181) (Aspergillus fischerianus)).